Here is a 650-residue protein sequence, read N- to C-terminus: Putative F-box protein R757 (650 aa).

Residues 7–53 enclose the F-box domain; that stretch reads FSVMESLPTELAYHVLSFIDFNSVVTYRLCSQESNNFIKSMLVFFPI.

The chain is Putative F-box protein R757 from Acanthamoeba polyphaga mimivirus (APMV).